A 313-amino-acid chain; its full sequence is Aspartate carbamoyltransferase catalytic subunit (313 aa).

The carbamoyl phosphate site is built by R58 and T59. Residue K86 coordinates L-aspartate. The carbamoyl phosphate site is built by R108, H136, and Q139. L-aspartate is bound by residues R169 and R223. Carbamoyl phosphate contacts are provided by G265 and P266.

Belongs to the aspartate/ornithine carbamoyltransferase superfamily. ATCase family. As to quaternary structure, heterododecamer (2C3:3R2) of six catalytic PyrB chains organized as two trimers (C3), and six regulatory PyrI chains organized as three dimers (R2).

The catalysed reaction is carbamoyl phosphate + L-aspartate = N-carbamoyl-L-aspartate + phosphate + H(+). It participates in pyrimidine metabolism; UMP biosynthesis via de novo pathway; (S)-dihydroorotate from bicarbonate: step 2/3. Its function is as follows. Catalyzes the condensation of carbamoyl phosphate and aspartate to form carbamoyl aspartate and inorganic phosphate, the committed step in the de novo pyrimidine nucleotide biosynthesis pathway. This Anaeromyxobacter dehalogenans (strain 2CP-1 / ATCC BAA-258) protein is Aspartate carbamoyltransferase catalytic subunit.